The sequence spans 162 residues: Beta-carotene hydroxylase (162 aa).

Residues 8 to 135 (VATVLVMELT…GRDHCVSFGF (128 aa)) enclose the Fatty acid hydroxylase domain.

This sequence belongs to the sterol desaturase family.

It carries out the reaction all-trans-beta-carotene + 4 reduced [2Fe-2S]-[ferredoxin] + 2 O2 + 4 H(+) = all-trans-zeaxanthin + 4 oxidized [2Fe-2S]-[ferredoxin] + 2 H2O. The protein operates within carotenoid biosynthesis; astaxanthin biosynthesis. Its function is as follows. Catalyzes the hydroxylation reaction from beta-carotene to zeaxanthin via beta-cryptoxanthin. This is Beta-carotene hydroxylase (crtZ) from Paracoccus sp. (strain N81106 / MBIC 01143) (Agrobacterium aurantiacum).